The sequence spans 377 residues: LIM/homeobox protein Lhx9 (377 aa).

2 LIM zinc-binding domains span residues 50-111 (ALCA…RFSV) and 112-174 (QRCA…LVQG). 3 disordered regions span residues 228–249 (NEND…QKTK), 309–346 (RQEN…TDLT), and 358–377 (SSLD…TNLF). Residues 248–307 (TKXMRTSFKHHQLRTMKSYFAINHNPDAKDLKQLAQKTGLTKRVLQVWFQNARAKFRRNV) constitute a DNA-binding region (homeobox). The span at 333 to 346 (LTPPSTATTLTDLT) shows a compositional bias: low complexity. Positions 365–377 (SGSPPQTTLTNLF) are enriched in polar residues.

It is found in the nucleus. Its function is as follows. May be involved in gonadal development. This Psalidodon fasciatus (Banded astyanax) protein is LIM/homeobox protein Lhx9 (lhx9).